A 484-amino-acid polypeptide reads, in one-letter code: tRNA-2-methylthio-N(6)-dimethylallyladenosine synthase (484 aa).

Residues 29 to 149 (GVFHIHTLGC…LPKLLDQNRA (121 aa)) enclose the MTTase N-terminal domain. [4Fe-4S] cluster contacts are provided by Cys38, Cys78, Cys112, Cys186, Cys190, and Cys193. The 230-residue stretch at 172–401 (RASRISSWVA…VALQEQITEE (230 aa)) folds into the Radical SAM core domain. One can recognise a TRAM domain in the interval 404-474 (ATFEGRDVEV…RHNLLADPDV (71 aa)).

The protein belongs to the methylthiotransferase family. MiaB subfamily. Monomer. It depends on [4Fe-4S] cluster as a cofactor.

The protein resides in the cytoplasm. It carries out the reaction N(6)-dimethylallyladenosine(37) in tRNA + (sulfur carrier)-SH + AH2 + 2 S-adenosyl-L-methionine = 2-methylsulfanyl-N(6)-dimethylallyladenosine(37) in tRNA + (sulfur carrier)-H + 5'-deoxyadenosine + L-methionine + A + S-adenosyl-L-homocysteine + 2 H(+). Functionally, catalyzes the methylthiolation of N6-(dimethylallyl)adenosine (i(6)A), leading to the formation of 2-methylthio-N6-(dimethylallyl)adenosine (ms(2)i(6)A) at position 37 in tRNAs that read codons beginning with uridine. This is tRNA-2-methylthio-N(6)-dimethylallyladenosine synthase from Bifidobacterium longum subsp. infantis (strain ATCC 15697 / DSM 20088 / JCM 1222 / NCTC 11817 / S12).